Reading from the N-terminus, the 339-residue chain is DNA-directed RNA polymerase subunit alpha (339 aa).

An alpha N-terminal domain (alpha-NTD) region spans residues 1–234; sequence MIEKNWQELI…DQFQIFINFE (234 aa). The tract at residues 251 to 339 is alpha C-terminal domain (alpha-CTD); sequence FNPALLRKVD…DLAKRFEDHV (89 aa).

This sequence belongs to the RNA polymerase alpha chain family. As to quaternary structure, homodimer. The RNAP catalytic core consists of 2 alpha, 1 beta, 1 beta' and 1 omega subunit. When a sigma factor is associated with the core the holoenzyme is formed, which can initiate transcription.

It catalyses the reaction RNA(n) + a ribonucleoside 5'-triphosphate = RNA(n+1) + diphosphate. DNA-dependent RNA polymerase catalyzes the transcription of DNA into RNA using the four ribonucleoside triphosphates as substrates. This is DNA-directed RNA polymerase subunit alpha from Maricaulis maris (strain MCS10) (Caulobacter maris).